We begin with the raw amino-acid sequence, 367 residues long: 4-hydroxy-3-methylbut-2-en-1-yl diphosphate synthase (flavodoxin) (367 aa).

Positions 268, 271, 303, and 310 each coordinate [4Fe-4S] cluster.

It belongs to the IspG family. [4Fe-4S] cluster serves as cofactor.

The enzyme catalyses (2E)-4-hydroxy-3-methylbut-2-enyl diphosphate + oxidized [flavodoxin] + H2O + 2 H(+) = 2-C-methyl-D-erythritol 2,4-cyclic diphosphate + reduced [flavodoxin]. The protein operates within isoprenoid biosynthesis; isopentenyl diphosphate biosynthesis via DXP pathway; isopentenyl diphosphate from 1-deoxy-D-xylulose 5-phosphate: step 5/6. Functionally, converts 2C-methyl-D-erythritol 2,4-cyclodiphosphate (ME-2,4cPP) into 1-hydroxy-2-methyl-2-(E)-butenyl 4-diphosphate. This chain is 4-hydroxy-3-methylbut-2-en-1-yl diphosphate synthase (flavodoxin), found in Halalkalibacterium halodurans (strain ATCC BAA-125 / DSM 18197 / FERM 7344 / JCM 9153 / C-125) (Bacillus halodurans).